Consider the following 776-residue polypeptide: Heat shock protein 110 (776 aa).

The disordered stretch occupies residues 741-776; the sequence is ILNKKKPAAPAPPKKEEPQPAAGDQPQSQPGEMDVD.

This sequence belongs to the heat shock protein 70 family.

The protein is Heat shock protein 110 of Caenorhabditis elegans.